The chain runs to 447 residues: MSMTPREIVHELNRHIIGQDDAKRAVAIALRNRWRRMQLPAELRAEVTPKNILMIGPTGVGKTEIARRLAKLANAPFIKVEATKFTEVGYVGRDVESIIRDLADAALKMLREQEIVRVRHRAEDAAEDRILDALLPQARVSSFSEEAQQSSGDSNTRQLFRKRLREGQLDDKEIEIEVAESMGVDIAAPPGMEEMTNQLQSLFANMGKGKRKSRKLKVKEALKMVRDEEAGRLVNEEELKAKALEAVEQHGIVFIDEIDKVAKRGNVGGADVSREGVQRDLLPLIEGCTVNTKLGMVKTDHILFIASGAFHLSKPSDLVPELQGRLPIRVELKALTPEDFERILKEPHASLTEQYRELLKTEGLHIEFADEGLKRLAEIAFQVNEKTENIGARRLHTLLERLLEEVSFSAGDLASTHDETPIHIDAAYVNSHLGELAQNEDLSRYIL.

Residues I17, 59-64 (GVGKTE), D256, E321, and R393 contribute to the ATP site.

Belongs to the ClpX chaperone family. HslU subfamily. A double ring-shaped homohexamer of HslV is capped on each side by a ring-shaped HslU homohexamer. The assembly of the HslU/HslV complex is dependent on binding of ATP.

It localises to the cytoplasm. In terms of biological role, ATPase subunit of a proteasome-like degradation complex; this subunit has chaperone activity. The binding of ATP and its subsequent hydrolysis by HslU are essential for unfolding of protein substrates subsequently hydrolyzed by HslV. HslU recognizes the N-terminal part of its protein substrates and unfolds these before they are guided to HslV for hydrolysis. This is ATP-dependent protease ATPase subunit HslU from Pseudomonas entomophila (strain L48).